The primary structure comprises 312 residues: Zinc import ATP-binding protein ZnuC (312 aa).

The region spanning 13–228 (VSLEDVGVLR…PEYVRLFGSR (216 aa)) is the ABC transporter domain. 45 to 52 (GPNGSGKS) is a binding site for ATP. Positions 241 to 312 (DHTHLPDGRV…HSRSGEGRHA (72 aa)) are disordered. Positions 243–312 (THLPDGRVLH…HSRSGEGRHA (70 aa)) are enriched in basic and acidic residues.

Belongs to the ABC transporter superfamily. Zinc importer (TC 3.A.1.15.5) family. In terms of assembly, the complex is composed of two ATP-binding proteins (ZnuC), two transmembrane proteins (ZnuB) and a solute-binding protein (ZnuA).

The protein resides in the cell inner membrane. It carries out the reaction Zn(2+)(out) + ATP(in) + H2O(in) = Zn(2+)(in) + ADP(in) + phosphate(in) + H(+)(in). Its function is as follows. Part of the ABC transporter complex ZnuABC involved in zinc import. Responsible for energy coupling to the transport system. The polypeptide is Zinc import ATP-binding protein ZnuC (Rhizobium etli (strain ATCC 51251 / DSM 11541 / JCM 21823 / NBRC 15573 / CFN 42)).